Reading from the N-terminus, the 544-residue chain is 4-coumarate--CoA ligase 1 (544 aa).

ATP-binding residues include Ser190, Ser191, Gly192, Thr193, Thr194, and Lys198. Position 240 (Tyr240) interacts with (E)-4-coumaroyl-AMP. Residue Lys261 participates in CoA binding. Residues 263–332 (DIVPFLELIQ…AKFPNAKLGQ (70 aa)) are SBD1. Ala310, Gln332, Gly333, Thr337, and Met345 together coordinate (E)-4-coumaroyl-AMP. 3 residues coordinate ATP: Gln332, Gly333, and Thr337. The segment at 333 to 400 (GYGMTEAGPV…IRGDQIMKGY (68 aa)) is SBD2. ATP contacts are provided by Asp421 and Arg436. Positions 438 and 442 each coordinate (E)-4-coumaroyl-AMP. 2 residues coordinate CoA: Lys444 and Gly445. Position 527 (Lys527) interacts with ATP.

It belongs to the ATP-dependent AMP-binding enzyme family. It depends on Mg(2+) as a cofactor.

It catalyses the reaction (E)-4-coumarate + ATP + CoA = (E)-4-coumaroyl-CoA + AMP + diphosphate. It carries out the reaction (E)-4-coumarate + ATP + H(+) = (E)-4-coumaroyl-AMP + diphosphate. The catalysed reaction is (E)-4-coumaroyl-AMP + CoA = (E)-4-coumaroyl-CoA + AMP + H(+). The protein operates within phytoalexin biosynthesis; 3,4',5-trihydroxystilbene biosynthesis; 3,4',5-trihydroxystilbene from trans-4-coumarate: step 1/2. Carboxylate--CoA ligase that may use 4-coumarate as substrate. Follows a two-step reaction mechanism, wherein the carboxylate substrate first undergoes adenylation by ATP, followed by a thioesterification in the presence of CoA to yield the final CoA thioester. The chain is 4-coumarate--CoA ligase 1 (4CL1) from Petroselinum crispum (Parsley).